The chain runs to 897 residues: Molybdenum import ATP-binding protein ModC 2 (897 aa).

The 231-residue stretch at 6–236 folds into the ABC transporter domain; the sequence is RGRIDAAFRG…PALPLAYSRD (231 aa). 38–45 is a binding site for ATP; it reads GPSGCGKT. In terms of domain architecture, Mop spans 295–365; that stretch reads ESSILNILPA…VKGVSLVRAS (71 aa). Residues 823–848 form a disordered region; sequence LGDRSVLGPREPDAGAKGRKRQNDPE. Residues 832-848 show a composition bias toward basic and acidic residues; it reads REPDAGAKGRKRQNDPE.

This sequence belongs to the ABC transporter superfamily. Molybdate importer (TC 3.A.1.8) family. As to quaternary structure, the complex is composed of two ATP-binding proteins (ModC), two transmembrane proteins (ModB) and a solute-binding protein (ModA).

It is found in the cell inner membrane. It catalyses the reaction molybdate(out) + ATP + H2O = molybdate(in) + ADP + phosphate + H(+). In terms of biological role, part of the ABC transporter complex ModABC involved in molybdenum import. Responsible for energy coupling to the transport system. This is Molybdenum import ATP-binding protein ModC 2 from Bradyrhizobium diazoefficiens (strain JCM 10833 / BCRC 13528 / IAM 13628 / NBRC 14792 / USDA 110).